A 910-amino-acid polypeptide reads, in one-letter code: Harmonin (910 aa).

Residues 1–86 are N-terminal domain; that stretch reads MDRKVAREFR…LTPRRSRKLK (86 aa). PDZ domains are found at residues 87 to 171 and 211 to 295; these read EVRL…GLIP and KVFI…AGRE. The segment at 194 to 833 is mediates interaction with MYO7B; sequence GVRGGLGSPG…KAWNQGGDWI (640 aa). Position 219 is a phosphoserine (Ser-219). 2 coiled-coil regions span residues 299-377 and 417-482; these read TDRE…WEED and TIRK…DLEE. The disordered stretch occupies residues 563 to 688; sequence VMPHPPSVNS…PPRGPGVSTI (126 aa). Pro residues predominate over residues 564–582; sequence MPHPPSVNSPSKVPAPPVL. The span at 583 to 596 shows a compositional bias: low complexity; that stretch reads PSSGHVSSSSSPWV. The segment covering 599–611 has biased composition (pro residues); sequence TPPPIPIPPPPSI. The segment covering 650–664 has biased composition (polar residues); that stretch reads NTHSGKPSSSPTTER. The region spanning 752-839 is the PDZ 3 domain; it reads DVRLLRIKKE…GDWIDLVVAV (88 aa). Residues 890 to 910 form a disordered region; it reads KSRERNQTDPSWRPASSAPSP. Residues 899 to 910 show a composition bias toward low complexity; the sequence is PSWRPASSAPSP.

In terms of assembly, part of the IMAC/intermicrovillar adhesion complex/intermicrovillar tip-link complex composed of ANKS4B, MYO7B, USH1C, CDHR2 and CDHR5. Part of a complex composed of USH1C, USH1G and MYO7A. Interacts with F-actin. Interacts with USH2A. Interacts with SLC4A7. Interacts (via PDZ1 domain) with the C-terminus of USHBP1. Interacts (via N-terminus and PDZ 2 domain) with CDH23. Interacts with USH1G. Interacts with MYO7B. Interacts with CDHR2 and CDHR5; may mediate their interaction with MYO7B at the microvilli tip. Interacts (via PDZ 1 domain) with ANKS4B. Interacts (via PDZ 1 domain) with DOCK4. In terms of tissue distribution, detected in stereocilia of cochlear hair cells (at protein level). Isoform 1 is expressed in the eye, cochlea, vestibule, heart, kidney, small intestine and testis; it is barely visible in skeletal muscle, liver, and lung and is absent from the brain. Isoforms 2 and 3 are expressed in the cochlea and vestibule.

Its subcellular location is the cytoplasm. The protein localises to the cytosol. It is found in the cytoskeleton. It localises to the cell projection. The protein resides in the microvillus. In terms of biological role, anchoring/scaffolding protein that is a part of the functional network formed by USH1C, USH1G, CDH23 and MYO7A that mediates mechanotransduction in cochlear hair cells. Required for normal development and maintenance of cochlear hair cell bundles. As part of the intermicrovillar adhesion complex/IMAC plays a role in brush border differentiation, controlling microvilli organization and length. Probably plays a central regulatory role in the assembly of the complex, recruiting CDHR2, CDHR5 and MYO7B to the microvilli tips. The sequence is that of Harmonin (Ush1c) from Mus musculus (Mouse).